Consider the following 501-residue polypeptide: MEALLQLKGIDKAFPGVKALSGAALNVYPGRVMALVGENGAGKSTMMKVLTGIYTRDAGTLLWLGKETTFTGPKSSQEAGIGIIHQELNLIPQLTIAENIFLGREFVNRFGKIDWKTMYAEADKLLAKLNLRFKSDKLVGDLSIGDQQMVEIAKVLSFESKVIIMDEPTDALTDTETESLFRVIRELKSQGRGIVYISHRMKEIFEICDDVTVFRDGQFIAEREVASLTEDSLIEMMVGRKLEDQYPHLNKAPGDIRLKVDNLCGPGVNDVSFTLRKGEILGVSGLMGAGRTELMKVLYGALPRTSGYVTLDGHEVVTRSPQDGLANGIVYISEDRKRDGLVLGMSVKENMSLTALRYFSRAGGSLKHADEQQAVSDFIRLFNVKTPSMEQAIGLLSGGNQQKVAIARGLMTRPKVLILDEPTRGVDVGAKKEIYQLINQFKADGLSIILVSSEMPEVLGMSDRIIVMHEGHLSGEFTREQATQEVLMAAAVGKLNRVNQE.

ABC transporter domains lie at 5-241 and 252-495; these read LQLK…VGRK and APGD…VGKL. Residue 37-44 participates in ATP binding; the sequence is GENGAGKS.

Belongs to the ABC transporter superfamily. Ribose importer (TC 3.A.1.2.1) family. In terms of assembly, the complex is composed of an ATP-binding protein (RbsA), two transmembrane proteins (RbsC) and a solute-binding protein (RbsB).

The protein resides in the cell inner membrane. The catalysed reaction is D-ribose(out) + ATP + H2O = D-ribose(in) + ADP + phosphate + H(+). Functionally, part of the ABC transporter complex RbsABC involved in ribose import. Responsible for energy coupling to the transport system. The polypeptide is Ribose import ATP-binding protein RbsA (Escherichia coli (strain UTI89 / UPEC)).